We begin with the raw amino-acid sequence, 371 residues long: Opsin, ultraviolet-sensitive (371 aa).

At 1–52 (MSNDSIHWEARYLPAGPPRLLGWNVPAEELIHIPEHWLVYPEPNPSLHYLLA) the chain is on the extracellular side. A glycan (N-linked (GlcNAc...) asparagine) is linked at Asn-3. A helical membrane pass occupies residues 53-73 (LLYILFTFLALLGNGLVIWIF). Over 74–84 (CAAKSLRTPSN) the chain is Cytoplasmic. A helical membrane pass occupies residues 85 to 105 (MFVVNLAICDFFMMIKTPIFI). Residues 106-121 (YNSFNTGFALGNLGCQ) are Extracellular-facing. A disulfide bond links Cys-120 and Cys-197. A helical transmembrane segment spans residues 122-142 (IFAVIGSLTGIGAAITNAAIA). The Cytoplasmic portion of the chain corresponds to 143–161 (YDRYSTIARPLDGKLSRGQ). Residues 162–182 (VILFIVLIWTYTIPWALMPVM) traverse the membrane as a helical segment. Residues 183 to 209 (GVWGRFVPEGFLTSCSFDYLTDTNEIR) lie on the Extracellular side of the membrane. A helical transmembrane segment spans residues 210 to 230 (IFVATIFTFSYCIPMILIIYY). Over 231-278 (YSQIVSHVVNHEKALREQAKKMNVDSLRSNANTSSQSAEIRIAKAAIT) the chain is Cytoplasmic. The helical transmembrane segment at 279–299 (ICFLYVLSWTPYGVMSMIGAF) threads the bilayer. Over 300–302 (GNK) the chain is Extracellular. A helical transmembrane segment spans residues 303-323 (ALLTPGVTMIPACTCKAVACL). Lys-318 is modified (N6-(retinylidene)lysine). Residues 324 to 371 (DPYVYAISHPKYRLELQKRLPWLELQEKPISDSTSTTTETVNTPPASS) are Cytoplasmic-facing.

It belongs to the G-protein coupled receptor 1 family. Opsin subfamily. Phosphorylated on some or all of the serine and threonine residues present in the C-terminal region. Expressed in the dorsal region of the retina.

It is found in the membrane. Its function is as follows. Visual pigments are the light-absorbing molecules that mediate vision. They consist of an apoprotein, opsin, covalently linked to 11-cis-retinal. In Apis mellifera (Honeybee), this protein is Opsin, ultraviolet-sensitive (UVOP).